Consider the following 157-residue polypeptide: Endoribonuclease YbeY (157 aa).

Positions 114, 118, and 124 each coordinate Zn(2+).

This sequence belongs to the endoribonuclease YbeY family. Zn(2+) is required as a cofactor.

It is found in the cytoplasm. In terms of biological role, single strand-specific metallo-endoribonuclease involved in late-stage 70S ribosome quality control and in maturation of the 3' terminus of the 16S rRNA. The sequence is that of Endoribonuclease YbeY from Yersinia pestis.